Here is a 262-residue protein sequence, read N- to C-terminus: Glycoprotein gp2 (262 aa).

Residues 1 to 45 (RRGSPQGGSHTTPHPDRLTPSPDDTYDDDTNHPNGRNNSIEIVPQ) form a disordered region.

The protein resides in the virion membrane. Its function is as follows. Virulence factor. The chain is Glycoprotein gp2 from Equus caballus (Horse).